The chain runs to 307 residues: Aspartate carbamoyltransferase catalytic subunit (307 aa).

Carbamoyl phosphate-binding residues include arginine 56 and threonine 57. Lysine 84 contacts L-aspartate. 3 residues coordinate carbamoyl phosphate: arginine 106, histidine 136, and glutamine 139. Residues arginine 169 and arginine 221 each coordinate L-aspartate. Carbamoyl phosphate is bound by residues alanine 262 and proline 263.

The protein belongs to the aspartate/ornithine carbamoyltransferase superfamily. ATCase family. In terms of assembly, heterododecamer (2C3:3R2) of six catalytic PyrB chains organized as two trimers (C3), and six regulatory PyrI chains organized as three dimers (R2).

It catalyses the reaction carbamoyl phosphate + L-aspartate = N-carbamoyl-L-aspartate + phosphate + H(+). Its pathway is pyrimidine metabolism; UMP biosynthesis via de novo pathway; (S)-dihydroorotate from bicarbonate: step 2/3. Catalyzes the condensation of carbamoyl phosphate and aspartate to form carbamoyl aspartate and inorganic phosphate, the committed step in the de novo pyrimidine nucleotide biosynthesis pathway. This chain is Aspartate carbamoyltransferase catalytic subunit, found in Streptococcus pneumoniae (strain JJA).